We begin with the raw amino-acid sequence, 591 residues long: MRSHYCGHLNKSLVGQTVELCGWVNRRRDLGGLIFIDMRDREGIVQVVVDPDMADVFAVANQLRSEFCIKLTGEVRARPESQVNKEMATGEVELLARSLEIINRSDVLPLDFNQKNSEEQRLKYRYLDLRRPEMSDRIKLRAKASSFVRRFLDTHGFLDIETPVLTKATPEGARDYLVPSRVHKGSFYALPQSPQLFKQLLMMSGFDRYYQIVKCFRDEDLRADRQPEFTQIDIETSFMTAEQVRAVTEKMIREMWLELLNVDLGDFPIMPYSEAMRRFGSDKPDLRNPMELVDVADLLKDVDFKVFSGPANDPKGRVAALCIPGGAALTRKQIDEYTAFVAIYGAKGLAWLKVNDLAAGMEGIQSPVAKFLTEEIIQAIIERTQAQTGDIILFGADSAKVVAEALGALRLKAGKELGITNESAWAPLWVVDFPMFESDDEGNVAAMHHPFTSPLNLSPEQLKANPEEALSNAYDMVLNGYEVGGGSVRIHNAEMQSAVFDILGITPEEQRLKFGFLLDALKFGTPPHAGLAFGLDRLVMLLCGTENIRDVIAFPKTTAAACLMTDAPSLANPAALEELAIAVKLATKDKA.

Glutamate 171 is an L-aspartate binding site. The aspartate stretch occupies residues 195 to 198 (QLFK). Arginine 217 contacts L-aspartate. ATP is bound by residues 217–219 (RDE) and glutamine 226. Histidine 448 is a binding site for L-aspartate. Glutamate 482 provides a ligand contact to ATP. Arginine 489 serves as a coordination point for L-aspartate. An ATP-binding site is contributed by 534–537 (GLDR).

The protein belongs to the class-II aminoacyl-tRNA synthetase family. Type 1 subfamily. In terms of assembly, homodimer.

The protein resides in the cytoplasm. The catalysed reaction is tRNA(Asp) + L-aspartate + ATP = L-aspartyl-tRNA(Asp) + AMP + diphosphate. Catalyzes the attachment of L-aspartate to tRNA(Asp) in a two-step reaction: L-aspartate is first activated by ATP to form Asp-AMP and then transferred to the acceptor end of tRNA(Asp). The sequence is that of Aspartate--tRNA ligase from Vibrio cholerae serotype O1 (strain ATCC 39541 / Classical Ogawa 395 / O395).